We begin with the raw amino-acid sequence, 290 residues long: Fructokinase (290 aa).

Thr130 serves as a coordination point for ATP. Zn(2+) is bound by residues His153, Cys169, His172, and Cys175. Residues Pro183 and 231–235 each bind ATP; that span reads GVMEK.

The protein belongs to the ROK (NagC/XylR) family. Homodimer. It depends on Mg(2+) as a cofactor.

The catalysed reaction is D-fructose + ATP = D-fructose 6-phosphate + ADP + H(+). With respect to regulation, inactivated by EDTA. Inhibition by zinc ions (Potential). The chain is Fructokinase (scrK) from Lactococcus lactis subsp. cremoris (Streptococcus cremoris).